A 263-amino-acid chain; its full sequence is Zinc import ATP-binding protein ZnuC (263 aa).

One can recognise an ABC transporter domain in the interval 11 to 226; it reads VELKNINVVF…PTFIHFFGDQ (216 aa). 43–50 provides a ligand contact to ATP; that stretch reads GPNGGGKS.

The protein belongs to the ABC transporter superfamily. Zinc importer (TC 3.A.1.15.5) family. The complex is composed of two ATP-binding proteins (ZnuC), two transmembrane proteins (ZnuB) and a solute-binding protein (ZnuA).

The protein localises to the cell inner membrane. The enzyme catalyses Zn(2+)(out) + ATP(in) + H2O(in) = Zn(2+)(in) + ADP(in) + phosphate(in) + H(+)(in). Part of the ABC transporter complex ZnuABC involved in zinc import. Responsible for energy coupling to the transport system. This chain is Zinc import ATP-binding protein ZnuC, found in Pasteurella multocida (strain Pm70).